The following is a 461-amino-acid chain: 3-oxoacyl-[acyl-carrier-protein] synthase, mitochondrial (461 aa).

A mitochondrion-targeting transit peptide spans 1–28 (MATSNLRRHLSASRLRLNRFISTSSSYH). One can recognise a Ketosynthase family 3 (KS3) domain in the interval 30–460 (HRRVVVTGLG…GTNASLLFAS (431 aa)). Active-site for beta-ketoacyl synthase activity residues include Cys-209, His-350, and His-389.

This sequence belongs to the thiolase-like superfamily. Beta-ketoacyl-ACP synthases family. In terms of assembly, homodimer. As to expression, expressed at the same level in leaves, roots, siliques and flowers.

It localises to the mitochondrion. The catalysed reaction is a fatty acyl-[ACP] + malonyl-[ACP] + H(+) = a 3-oxoacyl-[ACP] + holo-[ACP] + CO2. The enzyme catalyses butanoyl-[ACP] + malonyl-[ACP] + H(+) = 3-oxohexanoyl-[ACP] + holo-[ACP] + CO2. It carries out the reaction hexanoyl-[ACP] + malonyl-[ACP] + H(+) = 3-oxooctanoyl-[ACP] + holo-[ACP] + CO2. It catalyses the reaction octanoyl-[ACP] + malonyl-[ACP] + H(+) = 3-oxodecanoyl-[ACP] + holo-[ACP] + CO2. The catalysed reaction is decanoyl-[ACP] + malonyl-[ACP] + H(+) = 3-oxododecanoyl-[ACP] + holo-[ACP] + CO2. The enzyme catalyses dodecanoyl-[ACP] + malonyl-[ACP] + H(+) = 3-oxotetradecanoyl-[ACP] + holo-[ACP] + CO2. It carries out the reaction tetradecanoyl-[ACP] + malonyl-[ACP] + H(+) = 3-oxohexadecanoyl-[ACP] + holo-[ACP] + CO2. It catalyses the reaction hexadecanoyl-[ACP] + malonyl-[ACP] + H(+) = 3-oxooctadecanoyl-[ACP] + holo-[ACP] + CO2. The protein operates within lipid metabolism; fatty acid biosynthesis. Its activity is regulated as follows. Inhibited by cerulenin. Its function is as follows. Catalyzes all the condensation reaction of fatty acid synthesis by the addition to an acyl acceptor of two carbons from malonyl-ACP. Able to elongate saturated acyl chains from 4 to at least 16 carbons. Uses malonyl-CoA but not acetyl-CoA as primer substrate. When expressed in a heterologous system, reveals a bimodal distribution of products, with peaks at C8 and C14-C16. The major product of the reaction (octanoyl-ACP) is required for the lipoylation of essential mitochondrial proteins. Required for mitochondrial fatty acid synthesis (mtFAS). MtFAS are essential for photorespiration and plant development, probably by influencing mitochondrial membrane lipid composition and other lipid metabolic pathways. The sequence is that of 3-oxoacyl-[acyl-carrier-protein] synthase, mitochondrial from Arabidopsis thaliana (Mouse-ear cress).